The primary structure comprises 271 residues: Ribosomal RNA small subunit methyltransferase A (271 aa).

His-11, Leu-13, Gly-38, Glu-58, Asp-86, and Asn-101 together coordinate S-adenosyl-L-methionine.

This sequence belongs to the class I-like SAM-binding methyltransferase superfamily. rRNA adenine N(6)-methyltransferase family. RsmA subfamily.

It localises to the cytoplasm. The catalysed reaction is adenosine(1518)/adenosine(1519) in 16S rRNA + 4 S-adenosyl-L-methionine = N(6)-dimethyladenosine(1518)/N(6)-dimethyladenosine(1519) in 16S rRNA + 4 S-adenosyl-L-homocysteine + 4 H(+). In terms of biological role, specifically dimethylates two adjacent adenosines (A1518 and A1519) in the loop of a conserved hairpin near the 3'-end of 16S rRNA in the 30S particle. May play a critical role in biogenesis of 30S subunits. The sequence is that of Ribosomal RNA small subunit methyltransferase A from Helicobacter pylori (strain Shi470).